The primary structure comprises 602 residues: Auxin response factor 18 (602 aa).

The segment at residues 128–230 is a DNA-binding region (TF-B3); the sequence is FVKILTASDT…DLRVGVRRLA (103 aa). The tract at residues 359–396 is disordered; sequence TSPISTPAQQPQSKCKRSRPIEPSVKTPAPPSFLYSLP. Positions 360-371 are enriched in polar residues; it reads SPISTPAQQPQS. The PB1 domain maps to 489 to 581; the sequence is RSRTKVQMQG…EVKKMTTKLK (93 aa).

Belongs to the ARF family. In terms of assembly, homodimers and heterodimers.

It localises to the nucleus. Auxin response factors (ARFs) are transcriptional factors that bind specifically to the DNA sequence 5'-TGTCTC-3' found in the auxin-responsive promoter elements (AuxREs). Could act as transcriptional activator or repressor. Formation of heterodimers with Aux/IAA proteins may alter their ability to modulate early auxin response genes expression. In Arabidopsis thaliana (Mouse-ear cress), this protein is Auxin response factor 18 (ARF18).